Here is a 267-residue protein sequence, read N- to C-terminus: Type II pantothenate kinase (267 aa).

An ATP-binding site is contributed by 6-13 (DAGGTLIK). The active-site Proton acceptor is the E70. ATP contacts are provided by residues T99, 121 to 125 (GGMIQ), Y137, and S225.

This sequence belongs to the type II pantothenate kinase family. As to quaternary structure, homodimer.

It is found in the cytoplasm. The enzyme catalyses (R)-pantothenate + ATP = (R)-4'-phosphopantothenate + ADP + H(+). It functions in the pathway cofactor biosynthesis; coenzyme A biosynthesis; CoA from (R)-pantothenate: step 1/5. Catalyzes the phosphorylation of pantothenate (Pan), the first step in CoA biosynthesis. The chain is Type II pantothenate kinase from Staphylococcus aureus (strain Mu50 / ATCC 700699).